A 202-amino-acid polypeptide reads, in one-letter code: Holliday junction branch migration complex subunit RuvA (202 aa).

A domain I region spans residues 1–63 (MIEYLKGAIV…EDAHLLYGFS (63 aa)). Positions 64-142 (TKEERTLFGQ…LETSSDEILS (79 aa)) are domain II. The flexible linker stretch occupies residues 143 to 153 (ARTAVGDAALN). The segment at 153–202 (NTIASGEEAISALKMLGFADPAIRKAVKSILSEDSSLAVEDIIKRALRML) is domain III.

It belongs to the RuvA family. Homotetramer. Forms an RuvA(8)-RuvB(12)-Holliday junction (HJ) complex. HJ DNA is sandwiched between 2 RuvA tetramers; dsDNA enters through RuvA and exits via RuvB. An RuvB hexamer assembles on each DNA strand where it exits the tetramer. Each RuvB hexamer is contacted by two RuvA subunits (via domain III) on 2 adjacent RuvB subunits; this complex drives branch migration. In the full resolvosome a probable DNA-RuvA(4)-RuvB(12)-RuvC(2) complex forms which resolves the HJ.

Its subcellular location is the cytoplasm. The RuvA-RuvB-RuvC complex processes Holliday junction (HJ) DNA during genetic recombination and DNA repair, while the RuvA-RuvB complex plays an important role in the rescue of blocked DNA replication forks via replication fork reversal (RFR). RuvA specifically binds to HJ cruciform DNA, conferring on it an open structure. The RuvB hexamer acts as an ATP-dependent pump, pulling dsDNA into and through the RuvAB complex. HJ branch migration allows RuvC to scan DNA until it finds its consensus sequence, where it cleaves and resolves the cruciform DNA. This is Holliday junction branch migration complex subunit RuvA from Porphyromonas gingivalis (strain ATCC BAA-308 / W83).